A 504-amino-acid polypeptide reads, in one-letter code: Carnosic acid synthase (504 aa).

The chain crosses the membrane as a helical span at residues 4–24; it reads FIILSLAFIAAWVVYSRWSEY. Residue cysteine 447 participates in heme binding.

This sequence belongs to the cytochrome P450 family. Heme is required as a cofactor. Expressed in glandular trichomes of young leaves.

It localises to the membrane. It carries out the reaction 11-hydroxyferruginol + 3 reduced [NADPH--hemoprotein reductase] + 3 O2 = carnosate + 3 oxidized [NADPH--hemoprotein reductase] + 4 H2O + 4 H(+). It catalyses the reaction miltiradiene + 2 reduced [NADPH--hemoprotein reductase] + 2 O2 = miltiradien-20-al + 2 oxidized [NADPH--hemoprotein reductase] + 3 H2O + 2 H(+). The catalysed reaction is ferruginol + 3 reduced [NADPH--hemoprotein reductase] + 3 O2 = pisiferate + 3 oxidized [NADPH--hemoprotein reductase] + 4 H2O + 4 H(+). The protein operates within secondary metabolite biosynthesis; terpenoid biosynthesis. In terms of biological role, monooxygenase involved in the biosynthesis of carnosate, a potent antioxidant labdane-related diterpene natural products. Catalyzes the oxidation of 11-hydroxyferruginol to produce carnosate. Mediates the conversion of miltiradien into miltiradien-20-al. Also involved in the production of pisiferic acid and derivative products from ferruginol. This chain is Carnosic acid synthase, found in Rosmarinus officinalis (Rosemary).